Consider the following 301-residue polypeptide: Ribosomal RNA small subunit methyltransferase H (301 aa).

Residues 25–27 (GGH), Asp45, Phe72, Asp94, and Gln101 contribute to the S-adenosyl-L-methionine site.

It belongs to the methyltransferase superfamily. RsmH family.

It is found in the cytoplasm. The enzyme catalyses cytidine(1402) in 16S rRNA + S-adenosyl-L-methionine = N(4)-methylcytidine(1402) in 16S rRNA + S-adenosyl-L-homocysteine + H(+). Its function is as follows. Specifically methylates the N4 position of cytidine in position 1402 (C1402) of 16S rRNA. This is Ribosomal RNA small subunit methyltransferase H from Methylococcus capsulatus (strain ATCC 33009 / NCIMB 11132 / Bath).